A 197-amino-acid chain; its full sequence is Peptide deformylase (197 aa).

Positions 106 and 148 each coordinate Fe cation. Residue Glu149 is part of the active site. His152 provides a ligand contact to Fe cation.

This sequence belongs to the polypeptide deformylase family. Fe(2+) serves as cofactor.

The catalysed reaction is N-terminal N-formyl-L-methionyl-[peptide] + H2O = N-terminal L-methionyl-[peptide] + formate. In terms of biological role, removes the formyl group from the N-terminal Met of newly synthesized proteins. Requires at least a dipeptide for an efficient rate of reaction. N-terminal L-methionine is a prerequisite for activity but the enzyme has broad specificity at other positions. The chain is Peptide deformylase from Mycobacterium marinum (strain ATCC BAA-535 / M).